A 229-amino-acid polypeptide reads, in one-letter code: Urease accessory protein UreF (229 aa).

It belongs to the UreF family. As to quaternary structure, ureD, UreF and UreG form a complex that acts as a GTP-hydrolysis-dependent molecular chaperone, activating the urease apoprotein by helping to assemble the nickel containing metallocenter of UreC. The UreE protein probably delivers the nickel.

The protein localises to the cytoplasm. Its function is as follows. Required for maturation of urease via the functional incorporation of the urease nickel metallocenter. In Alcanivorax borkumensis (strain ATCC 700651 / DSM 11573 / NCIMB 13689 / SK2), this protein is Urease accessory protein UreF.